Consider the following 631-residue polypeptide: Glutamyl-tRNA(Gln) amidotransferase subunit E (631 aa).

This sequence belongs to the GatB/GatE family. GatE subfamily. As to quaternary structure, heterodimer of GatD and GatE.

It carries out the reaction L-glutamyl-tRNA(Gln) + L-glutamine + ATP + H2O = L-glutaminyl-tRNA(Gln) + L-glutamate + ADP + phosphate + H(+). Functionally, allows the formation of correctly charged Gln-tRNA(Gln) through the transamidation of misacylated Glu-tRNA(Gln) in organisms which lack glutaminyl-tRNA synthetase. The reaction takes place in the presence of glutamine and ATP through an activated gamma-phospho-Glu-tRNA(Gln). The GatDE system is specific for glutamate and does not act on aspartate. The sequence is that of Glutamyl-tRNA(Gln) amidotransferase subunit E from Methanococcus maripaludis (strain C6 / ATCC BAA-1332).